The sequence spans 777 residues: Ribosome-releasing factor 2, mitochondrial (777 aa).

The region spanning 68–353 is the tr-type G domain; sequence AKIRNIGIMA…AITMYLPSPE (286 aa). GTP-binding positions include 77–84, 141–145, and 195–198; these read AHIDAGKT, DTPGH, and NKMD.

The protein belongs to the TRAFAC class translation factor GTPase superfamily. Classic translation factor GTPase family. EF-G/EF-2 subfamily.

The protein localises to the mitochondrion. It catalyses the reaction GTP + H2O = GDP + phosphate + H(+). Mitochondrial GTPase that mediates the disassembly of ribosomes from messenger RNA at the termination of mitochondrial protein biosynthesis. Acts in collaboration with MRRF. GTP hydrolysis follows the ribosome disassembly and probably occurs on the ribosome large subunit. Not involved in the GTP-dependent ribosomal translocation step during translation elongation. The polypeptide is Ribosome-releasing factor 2, mitochondrial (Bos taurus (Bovine)).